The chain runs to 366 residues: MSYNTFGHIFRVTTWGESHGPALGATVDGCPPGVAIEAEAIQHWLDRRKPGQNRFTTQRQEPDAVRILSGTFEGRSTGTPIQLMIENTDQRSKDYGEIARSFRPGHADIAYHWKYGLRDYRGGGRSSARETAARVAAGGVARAALAALVPGLRIEGYMVQIGPHAIDRARFDADEIERNPFWCPDSDTAALWADYLDGLRKAHDSVGAIVEVRASGVPAGLGAPIYGKLDSDLAAAMMTINAVKGVEIGEGMAAACLTGSANADEIRMGPEGPEFLTNHAGGILGGISTGQDVVVRFAVKPTSSILTPRRSVTTDGCEVEVVTKGRHDPCVGIRAVPVGEAMMACVLLDHLLLDRGQTGGLRGTIG.

R48 and R54 together coordinate NADP(+). FMN is bound by residues 125–127 (RSS), 241–242 (NA), G285, 300–304 (KPTSS), and R326.

Belongs to the chorismate synthase family. As to quaternary structure, homotetramer. The cofactor is FMNH2.

The catalysed reaction is 5-O-(1-carboxyvinyl)-3-phosphoshikimate = chorismate + phosphate. It functions in the pathway metabolic intermediate biosynthesis; chorismate biosynthesis; chorismate from D-erythrose 4-phosphate and phosphoenolpyruvate: step 7/7. Functionally, catalyzes the anti-1,4-elimination of the C-3 phosphate and the C-6 proR hydrogen from 5-enolpyruvylshikimate-3-phosphate (EPSP) to yield chorismate, which is the branch point compound that serves as the starting substrate for the three terminal pathways of aromatic amino acid biosynthesis. This reaction introduces a second double bond into the aromatic ring system. The sequence is that of Chorismate synthase from Cereibacter sphaeroides (strain ATCC 17029 / ATH 2.4.9) (Rhodobacter sphaeroides).